Consider the following 223-residue polypeptide: Pyridoxine/pyridoxamine 5'-phosphate oxidase (223 aa).

Residues 9–12 and Lys76 each bind substrate; that span reads RVGY. Residues 71-76, 86-87, Lys93, and Gln115 each bind FMN; these read RTVLCK and FT. Substrate-binding residues include Tyr133, Arg137, and Ser141. FMN is bound by residues 150–151 and Trp196; that span reads QS. 202–204 contacts substrate; that stretch reads RMH. Arg206 is an FMN binding site.

This sequence belongs to the pyridoxamine 5'-phosphate oxidase family. Homodimer. FMN serves as cofactor.

The enzyme catalyses pyridoxamine 5'-phosphate + O2 + H2O = pyridoxal 5'-phosphate + H2O2 + NH4(+). It carries out the reaction pyridoxine 5'-phosphate + O2 = pyridoxal 5'-phosphate + H2O2. It functions in the pathway cofactor metabolism; pyridoxal 5'-phosphate salvage; pyridoxal 5'-phosphate from pyridoxamine 5'-phosphate: step 1/1. Its pathway is cofactor metabolism; pyridoxal 5'-phosphate salvage; pyridoxal 5'-phosphate from pyridoxine 5'-phosphate: step 1/1. Catalyzes the oxidation of either pyridoxine 5'-phosphate (PNP) or pyridoxamine 5'-phosphate (PMP) into pyridoxal 5'-phosphate (PLP). The chain is Pyridoxine/pyridoxamine 5'-phosphate oxidase from Rhodococcus jostii (strain RHA1).